A 394-amino-acid chain; its full sequence is MAKAKFERTKPHVNIGTIGHVDHGKTTLTAAISTVLAKKGQAIAQSYADVDKTPEERERGITINASHVEYETKTRHYAHVDCPGHADYVKNMITGAAQMDGAILVIAASDGVMAQTKEHILLARQVGVPKIVVFLNKCDFMTDPDMQDLVEMEVRELLSKYGFDGDNTPVIRGSGLKALEGDPVWEAKIDELMDAVDSWIPLPERSTDKPFLLAIEDVFTISGRGTVVTGRVERGVLKVNDEVEIVGLKDTQKTVVTGIEMFRKSLDQAEAGDNAGILLRGIKKEDVERGQVLVKPGSIKPHRTFTAKVYILKKEEGGRHTPIVSGYRPQFYFRTTDVTGAISLPAGVDLVMPGDDVEMTVELIAPVAIEDGSKFSIREGGKTVGHGSVIKTSN.

Residues 10 to 204 (KPHVNIGTIG…AVDSWIPLPE (195 aa)) enclose the tr-type G domain. A G1 region spans residues 19–26 (GHVDHGKT). Residue 19 to 26 (GHVDHGKT) participates in GTP binding. Thr-26 lines the Mg(2+) pocket. The G2 stretch occupies residues 60–64 (GITIN). Positions 81 to 84 (DCPG) are G3. Residues 81-85 (DCPGH) and 136-139 (NKCD) each bind GTP. The segment at 136–139 (NKCD) is G4. The G5 stretch occupies residues 174-176 (SGL).

It belongs to the TRAFAC class translation factor GTPase superfamily. Classic translation factor GTPase family. EF-Tu/EF-1A subfamily. In terms of assembly, monomer.

It is found in the cytoplasm. The catalysed reaction is GTP + H2O = GDP + phosphate + H(+). Its function is as follows. GTP hydrolase that promotes the GTP-dependent binding of aminoacyl-tRNA to the A-site of ribosomes during protein biosynthesis. In Ureaplasma parvum serovar 3 (strain ATCC 27815 / 27 / NCTC 11736), this protein is Elongation factor Tu.